The sequence spans 206 residues: Imidazole glycerol phosphate synthase subunit hisH (206 aa).

Positions 2–206 (KVGLVDYSMG…REVMKKAASL (205 aa)) constitute a Glutamine amidotransferase type-1 domain. Residue C80 is the Nucleophile of the active site. Active-site residues include H184 and E186.

Heterodimer of hisH and hisF.

It is found in the plastid. Its subcellular location is the chloroplast. The enzyme catalyses 5-[(5-phospho-1-deoxy-D-ribulos-1-ylimino)methylamino]-1-(5-phospho-beta-D-ribosyl)imidazole-4-carboxamide + L-glutamine = D-erythro-1-(imidazol-4-yl)glycerol 3-phosphate + 5-amino-1-(5-phospho-beta-D-ribosyl)imidazole-4-carboxamide + L-glutamate + H(+). It carries out the reaction L-glutamine + H2O = L-glutamate + NH4(+). The protein operates within amino-acid biosynthesis; L-histidine biosynthesis; L-histidine from 5-phospho-alpha-D-ribose 1-diphosphate: step 5/9. IGPS catalyzes the conversion of PRFAR and glutamine to IGP, AICAR and glutamate. The HisH subunit catalyzes the hydrolysis of glutamine to glutamate and ammonia as part of the synthesis of IGP and AICAR. The resulting ammonia molecule is channeled to the active site of HisF. In Cyanidioschyzon merolae (strain NIES-3377 / 10D) (Unicellular red alga), this protein is Imidazole glycerol phosphate synthase subunit hisH.